The sequence spans 144 residues: Large ribosomal subunit protein uL15 (144 aa).

A compositionally biased stretch (polar residues) spans 1–12 (MRLNTLSPSLGS). The tract at residues 1–51 (MRLNTLSPSLGSRKNHKRLGRGIGSGFGKTAGRGHKGQKSRSGGHVNRGFE) is disordered. The segment covering 21 to 31 (RGIGSGFGKTA) has biased composition (gly residues).

This sequence belongs to the universal ribosomal protein uL15 family. As to quaternary structure, part of the 50S ribosomal subunit.

Functionally, binds to the 23S rRNA. In Buchnera aphidicola subsp. Schizaphis graminum (strain Sg), this protein is Large ribosomal subunit protein uL15.